The sequence spans 260 residues: uncharacterized protein (260 aa).

A signal peptide spans 1–22; that stretch reads MGNIKSFALYISILLLIVVVAG. The N-palmitoyl cysteine moiety is linked to residue cysteine 23. Cysteine 23 is lipidated: S-diacylglycerol cysteine.

It belongs to the staphylococcal tandem lipoprotein family.

The protein resides in the cell membrane. This is an uncharacterized protein from Staphylococcus aureus (strain MRSA252).